Here is a 441-residue protein sequence, read N- to C-terminus: Divalent metal cation transporter MntH (441 aa).

A run of 11 helical transmembrane segments spans residues 41 to 61 (TGIAALLPFVGPAVIASIGYM), 74 to 94 (AAYGYRLLWVVLAANAIAMLF), 116 to 136 (HFPAPIVWGMWIASEIAAMAT), 141 to 161 (FLGGALAFALLCHLPLFAGMI), 183 to 203 (AAIAALVGVIGACYLGELMIA), 223 to 243 (AALTIAVGIIGATIMPHTLYL), 271 to 291 (VVVALGLAGFVNLAMVMMAAS), 311 to 331 (IPVLGPAAGVLFLVALLTSGV), 360 to 380 (AVTIAPAFAVVACGCDVTRAM), 381 to 401 (VASQVVLSFVLPMPMIALLIL), and 419 to 439 (IVAGTATVVIVGLNAYLVWAA).

It belongs to the NRAMP family.

It is found in the cell inner membrane. Functionally, h(+)-stimulated, divalent metal cation uptake system. The protein is Divalent metal cation transporter MntH of Burkholderia ambifaria (strain ATCC BAA-244 / DSM 16087 / CCUG 44356 / LMG 19182 / AMMD) (Burkholderia cepacia (strain AMMD)).